Consider the following 413-residue polypeptide: uncharacterized protein (413 aa).

Residues 25 to 47 (IVNLSALLPLITSTTSTAGSIIT) traverse the membrane as a helical segment.

It localises to the host membrane. This is an uncharacterized protein from Acidianus sp. F28 (AFV-2).